A 315-amino-acid polypeptide reads, in one-letter code: Aspartate carbamoyltransferase catalytic subunit (315 aa).

Residues arginine 65 and threonine 66 each contribute to the carbamoyl phosphate site. L-aspartate is bound at residue lysine 93. The carbamoyl phosphate site is built by arginine 115, histidine 145, and glutamine 148. 2 residues coordinate L-aspartate: arginine 179 and arginine 234. Carbamoyl phosphate-binding residues include glycine 275 and proline 276.

It belongs to the aspartate/ornithine carbamoyltransferase superfamily. ATCase family. Heterododecamer (2C3:3R2) of six catalytic PyrB chains organized as two trimers (C3), and six regulatory PyrI chains organized as three dimers (R2).

The enzyme catalyses carbamoyl phosphate + L-aspartate = N-carbamoyl-L-aspartate + phosphate + H(+). Its pathway is pyrimidine metabolism; UMP biosynthesis via de novo pathway; (S)-dihydroorotate from bicarbonate: step 2/3. Its function is as follows. Catalyzes the condensation of carbamoyl phosphate and aspartate to form carbamoyl aspartate and inorganic phosphate, the committed step in the de novo pyrimidine nucleotide biosynthesis pathway. The polypeptide is Aspartate carbamoyltransferase catalytic subunit (Xanthomonas euvesicatoria pv. vesicatoria (strain 85-10) (Xanthomonas campestris pv. vesicatoria)).